A 413-amino-acid chain; its full sequence is ORC1-type DNA replication protein 2 (413 aa).

ATP contacts are provided by residues 70 to 74 (TGKTA), tyrosine 217, and arginine 229.

Belongs to the CDC6/cdc18 family. As to quaternary structure, monomer. Interacts with Cdc6-3, MCM and PolB1. Post-translationally, autophosphorylated in vitro.

Involved in regulation of DNA replication. May play essential roles in origin recognition and cell cycle control of replication. Binds both single-stranded and double-stranded DNA, with a preference for molecules that contain a bubble, a fork, or a tail. Has a weak ATPase activity. Stimulates the binding of the MCM helicase to the origin DNA, but strongly inhibits ATPase and DNA helicase activities of MCM. Also regulates the DNA polymerase and the nuclease activities of PolB1. The polypeptide is ORC1-type DNA replication protein 2 (cdc6-2) (Saccharolobus solfataricus (strain ATCC 35092 / DSM 1617 / JCM 11322 / P2) (Sulfolobus solfataricus)).